Reading from the N-terminus, the 100-residue chain is Large ribosomal subunit protein uL23 (100 aa).

It belongs to the universal ribosomal protein uL23 family. In terms of assembly, part of the 50S ribosomal subunit. Contacts protein L29, and trigger factor when it is bound to the ribosome.

One of the early assembly proteins it binds 23S rRNA. One of the proteins that surrounds the polypeptide exit tunnel on the outside of the ribosome. Forms the main docking site for trigger factor binding to the ribosome. This Shewanella denitrificans (strain OS217 / ATCC BAA-1090 / DSM 15013) protein is Large ribosomal subunit protein uL23.